The sequence spans 165 residues: uncharacterized protein (165 aa).

A helical membrane pass occupies residues 16–36 (ASISSILNFFFFYIMEYFVAV).

This sequence belongs to the asfivirus F165R family.

The protein localises to the host membrane. This is an uncharacterized protein from Ornithodoros (relapsing fever ticks).